We begin with the raw amino-acid sequence, 533 residues long: Quinate permease (533 aa).

Topologically, residues 1-21 are cytoplasmic; that stretch reads MSILALVEDRPTPREVYNWRV. A helical membrane pass occupies residues 22 to 42; the sequence is YLLAAVASFTSCMIGYDSAFI. The Extracellular portion of the chain corresponds to 43–67; sequence GTTLSLQSFQNEFNWESLNTDLISA. The helical transmembrane segment at 68–88 threads the bilayer; it reads NIVSLYQAGAFFGALFAYPIG. Residues 89–94 lie on the Cytoplasmic side of the membrane; the sequence is HFWGRR. The chain crosses the membrane as a helical span at residues 95–115; sequence WGLMFSALIFFLGAGMMLGAN. Over 116-127 the chain is Extracellular; the sequence is GDRGLGLIYGGR. The helical transmembrane segment at 128–148 threads the bilayer; the sequence is VLAGIGVGAGSNICPIYISEM. The Cytoplasmic portion of the chain corresponds to 149-156; the sequence is APPAIRGR. Residues 157 to 177 form a helical membrane-spanning segment; it reads LVGVYELGWQIGGVVGFWINY. The Extracellular portion of the chain corresponds to 178–191; that stretch reads GVDETLAPSHKQWI. Residues 192–212 form a helical membrane-spanning segment; sequence IPFAVQLIPAGLLIIGALLIR. Residues 213-282 lie on the Cytoplasmic side of the membrane; sequence ESPRWLFLRG…AWTNKRILYR (70 aa). Residues 283–303 form a helical membrane-spanning segment; it reads LFLGSMLFLWQNGSGINAINY. Residues 304 to 324 are Extracellular-facing; it reads YSPRVFKSIGVSGGNTSLLTT. The chain crosses the membrane as a helical span at residues 325–346; it reads GIFGVVKAVITFVWLLYLIDHF. Residues 347-349 are Cytoplasmic-facing; that stretch reads GRR. The chain crosses the membrane as a helical span at residues 350–370; the sequence is NLLLVGAAGGSVCLWIVGGYI. Over 371–385 the chain is Extracellular; the sequence is KIAKPENNPEGTQLD. A helical membrane pass occupies residues 386–406; it reads SGGIAAIFFFYLWTAFYTPSW. At 407-431 the chain is on the cytoplasmic side; it reads NGTPWVINSEMFDPTVRSLAQACAA. The helical transmembrane segment at 432–452 threads the bilayer; sequence ASNWLWNFLISRFTPQMFTSM. Over 453-454 the chain is Extracellular; it reads GY. The helical transmembrane segment at 455–475 threads the bilayer; that stretch reads GVYFFFASLMILSIVFVFFLI. At 476–533 the chain is on the cytoplasmic side; the sequence is PETKGVPLESMETLFDKKPVWHAHSQLIRELRENEEAFRADMGASGKGGVTKEYVEEA.

It belongs to the major facilitator superfamily. Sugar transporter (TC 2.A.1.1) family. In terms of assembly, interacts with creB. Post-translationally, ubiquitinated. Deubiquitinated by creB, probably to control its activity or amount.

The protein localises to the cell membrane. Integral membrane transporter that imports quinic acid to be catabolized as a carbon source. This Emericella nidulans (strain FGSC A4 / ATCC 38163 / CBS 112.46 / NRRL 194 / M139) (Aspergillus nidulans) protein is Quinate permease (qutD).